Consider the following 310-residue polypeptide: Putative S-adenosyl-L-methionine-dependent methyltransferase Franean1_4929 (310 aa).

The tract at residues 1 to 28 (MSRPSAPRGRTELRSIHERGHERGSAGV) is disordered. A compositionally biased stretch (basic and acidic residues) spans 9 to 24 (GRTELRSIHERGHERG). S-adenosyl-L-methionine contacts are provided by residues aspartate 136 and 165 to 166 (DL).

Belongs to the UPF0677 family.

Exhibits S-adenosyl-L-methionine-dependent methyltransferase activity. The sequence is that of Putative S-adenosyl-L-methionine-dependent methyltransferase Franean1_4929 from Parafrankia sp. (strain EAN1pec).